The chain runs to 275 residues: NH(3)-dependent NAD(+) synthetase (275 aa).

46 to 53 is a binding site for ATP; it reads GISGGQDS. Asp52 contacts Mg(2+). Arg140 provides a ligand contact to deamido-NAD(+). Thr160 is a binding site for ATP. Glu165 is a Mg(2+) binding site. Residues Lys173 and Asp180 each contribute to the deamido-NAD(+) site. 2 residues coordinate ATP: Lys189 and Thr211. 260-261 serves as a coordination point for deamido-NAD(+); the sequence is HK.

The protein belongs to the NAD synthetase family. In terms of assembly, homodimer.

The catalysed reaction is deamido-NAD(+) + NH4(+) + ATP = AMP + diphosphate + NAD(+) + H(+). Its pathway is cofactor biosynthesis; NAD(+) biosynthesis; NAD(+) from deamido-NAD(+) (ammonia route): step 1/1. In terms of biological role, catalyzes the ATP-dependent amidation of deamido-NAD to form NAD. Uses ammonia as a nitrogen source. The chain is NH(3)-dependent NAD(+) synthetase from Escherichia coli O6:K15:H31 (strain 536 / UPEC).